We begin with the raw amino-acid sequence, 285 residues long: MSQLKPQEVVRLGDIQMANHLPFVLFGGMNVLESKDLAFEIAETYIDICKRLDIPYVFKASFDKANRSSLHSFRGPGLEKGIEWLGDIKKHFNVPIITDVHEPYQAAPVAEVADIIQLPAFLSRQTDLVEAMAKTQAIINIKKAQFLAPHEMRHILHKCLEVGNDKLILCERGSAFGYNNLVVDMLGFDIMKEMNVPVFFDVTHALQTPGGRSDSAGGRRAQITTLARAGMATGLAGLFLESHPDPDKAKCDGPSALRLSQLEPFLAQLKELDTLVKGFKKLDTH.

This sequence belongs to the KdsA family.

It localises to the cytoplasm. It catalyses the reaction D-arabinose 5-phosphate + phosphoenolpyruvate + H2O = 3-deoxy-alpha-D-manno-2-octulosonate-8-phosphate + phosphate. It participates in carbohydrate biosynthesis; 3-deoxy-D-manno-octulosonate biosynthesis; 3-deoxy-D-manno-octulosonate from D-ribulose 5-phosphate: step 2/3. The protein operates within bacterial outer membrane biogenesis; lipopolysaccharide biosynthesis. This is 2-dehydro-3-deoxyphosphooctonate aldolase from Acinetobacter baumannii (strain SDF).